A 532-amino-acid polypeptide reads, in one-letter code: Tyrosinase (532 aa).

A signal peptide spans 1-22; that stretch reads MESTTVLLAASTLLLVLHASYG. Topologically, residues 23–479 are lumenal, melanosome; that stretch reads QFPRACSTAQ…LEQARQIWQW (457 aa). N-linked (GlcNAc...) asparagine glycosylation is found at N90, N115, and N165. 3 residues coordinate Cu cation: H184, H206, and H215. N234 and N341 each carry an N-linked (GlcNAc...) asparagine glycan. H367 and H371 together coordinate Cu cation. An N-linked (GlcNAc...) asparagine glycan is attached at N375. H394 serves as a coordination point for Cu cation. Residues 480–500 traverse the membrane as a helical segment; sequence LLGAAVVGGLVTAVIATIISL. Topologically, residues 501-532 are cytoplasmic; it reads TCRRKRRTKTSEETRPLLMEAEDYHATYQSNL.

This sequence belongs to the tyrosinase family. As to quaternary structure, active tyrosinase has been found as a homodimer and homotetramer. Requires Cu(2+) as cofactor. Frog skin.

The protein resides in the melanosome membrane. The catalysed reaction is 2 L-dopa + O2 = 2 L-dopaquinone + 2 H2O. It catalyses the reaction L-tyrosine + O2 = L-dopaquinone + H2O. Activated by trypsin, chymotrypsin and subtilisin. Activated by alpha-chymotrypsin, thermolysin and Pronase. Inhibited by its product L-DOPA and tyrosine. Its function is as follows. This is a copper-containing oxidase that functions in the formation of pigments such as melanins and other polyphenolic compounds. Catalyzes the initial and rate limiting step in the cascade of reactions leading to melanin production from tyrosine. In addition to hydroxylating tyrosine to DOPA (3,4-dihydroxyphenylalanine), also catalyzes the oxidation of DOPA to DOPA-quinone. The sequence is that of Tyrosinase from Pelophylax lessonae (Pool frog).